The sequence spans 679 residues: Translation initiation factor IF-2 (679 aa).

A tr-type G domain is found at K178 to K347. Residues G187 to T194 are G1. G187–T194 provides a ligand contact to GTP. Residues G212–H216 form a G2 region. Residues D233–G236 form a G3 region. GTP-binding positions include D233–H237 and N287–D290. Residues N287–D290 form a G4 region. Positions S323–K325 are G5.

The protein belongs to the TRAFAC class translation factor GTPase superfamily. Classic translation factor GTPase family. IF-2 subfamily.

It is found in the cytoplasm. In terms of biological role, one of the essential components for the initiation of protein synthesis. Protects formylmethionyl-tRNA from spontaneous hydrolysis and promotes its binding to the 30S ribosomal subunits. Also involved in the hydrolysis of GTP during the formation of the 70S ribosomal complex. This Clostridium perfringens (strain ATCC 13124 / DSM 756 / JCM 1290 / NCIMB 6125 / NCTC 8237 / Type A) protein is Translation initiation factor IF-2.